Reading from the N-terminus, the 468-residue chain is Glutamate--tRNA ligase (468 aa).

The 'HIGH' region signature appears at 11–21; it reads PSPTGFIHLGN. Positions 243–247 match the 'KMSKS' region motif; that stretch reads KMSKR. K246 lines the ATP pocket.

It belongs to the class-I aminoacyl-tRNA synthetase family. Glutamate--tRNA ligase type 1 subfamily. In terms of assembly, monomer.

Its subcellular location is the cytoplasm. The catalysed reaction is tRNA(Glu) + L-glutamate + ATP = L-glutamyl-tRNA(Glu) + AMP + diphosphate. In terms of biological role, catalyzes the attachment of glutamate to tRNA(Glu) in a two-step reaction: glutamate is first activated by ATP to form Glu-AMP and then transferred to the acceptor end of tRNA(Glu). The polypeptide is Glutamate--tRNA ligase (Delftia acidovorans (strain DSM 14801 / SPH-1)).